A 108-amino-acid polypeptide reads, in one-letter code: Peptidyl-prolyl cis-trans isomerase Fkbp12 (108 aa).

The tract at residues Met-1–Gln-21 is disordered. Residues Gly-20–Glu-108 enclose the PPIase FKBP-type domain.

The protein belongs to the FKBP-type PPIase family. FKBP1 subfamily.

The protein resides in the cytoplasm. The catalysed reaction is [protein]-peptidylproline (omega=180) = [protein]-peptidylproline (omega=0). In terms of biological role, PPIases accelerate the folding of proteins. It catalyzes the cis-trans isomerization of proline imidic peptide bonds in oligopeptides. Binds to ligand-free TGF beta type I receptor, from which it is released upon a ligand-induced, type II receptor mediated phosphorylation of the type I receptor. Binding is inhibitory to the signaling pathways of the TGF beta family ligands. The protein is Peptidyl-prolyl cis-trans isomerase Fkbp12 of Drosophila melanogaster (Fruit fly).